Here is a 312-residue protein sequence, read N- to C-terminus: MKSDKPFLERYFYTPTLLQKGLIFALYPFSLIYQCIATFKRKTAKKHDFKIPIISVGNLIAGGSGKTPFILEIAPRYQEVAIISRGYQRNSKGLVVVSVKGKILVSQNTAGDEAYLLALNLKQASVIVSEKRELGILKALELGSKIVFLDDGFRFNFNQFNLLLKPKVPPYYPFCLPSGLYRESIKSYKEAHLVITEDKDYKRITSTTHPTKRMLLVTAIANPSRLNAFLPKEVVKKIYFKDHAPFNLKLLEKEFHKNNATSLLVTSKDLVKLQDCKLPLSVLDLRLEIDPKVLEKIDNYIFSYPYNTKEHL.

60–67 (IAGGSGKT) is an ATP binding site.

It belongs to the LpxK family.

The enzyme catalyses a lipid A disaccharide + ATP = a lipid IVA + ADP + H(+). It functions in the pathway glycolipid biosynthesis; lipid IV(A) biosynthesis; lipid IV(A) from (3R)-3-hydroxytetradecanoyl-[acyl-carrier-protein] and UDP-N-acetyl-alpha-D-glucosamine: step 6/6. Its function is as follows. Transfers the gamma-phosphate of ATP to the 4'-position of a tetraacyldisaccharide 1-phosphate intermediate (termed DS-1-P) to form tetraacyldisaccharide 1,4'-bis-phosphate (lipid IVA). The protein is Tetraacyldisaccharide 4'-kinase of Helicobacter acinonychis (strain Sheeba).